The primary structure comprises 389 residues: Sulfate adenylyltransferase (389 aa).

It belongs to the sulfate adenylyltransferase family.

The catalysed reaction is sulfate + ATP + H(+) = adenosine 5'-phosphosulfate + diphosphate. It participates in sulfur metabolism; hydrogen sulfide biosynthesis; sulfite from sulfate: step 1/3. This Deinococcus geothermalis (strain DSM 11300 / CIP 105573 / AG-3a) protein is Sulfate adenylyltransferase.